We begin with the raw amino-acid sequence, 337 residues long: GTPase Obg (337 aa).

An Obg domain is found at 1-159; it reads MKFVDSASIF…LMLNMELKLM (159 aa). Positions 160–323 constitute an OBG-type G domain; the sequence is ADVGLVGFPN…LKDELWREVS (164 aa). Residues 166–173, 191–195, 213–216, 280–283, and 304–306 each bind GTP; these read GFPNAGKS, FTTLV, DIPG, TKMD, and SAV. Residues Ser173 and Thr193 each contribute to the Mg(2+) site.

It belongs to the TRAFAC class OBG-HflX-like GTPase superfamily. OBG GTPase family. As to quaternary structure, monomer. Requires Mg(2+) as cofactor.

It localises to the cytoplasm. An essential GTPase which binds GTP, GDP and possibly (p)ppGpp with moderate affinity, with high nucleotide exchange rates and a fairly low GTP hydrolysis rate. Plays a role in control of the cell cycle, stress response, ribosome biogenesis and in those bacteria that undergo differentiation, in morphogenesis control. This is GTPase Obg from Pelodictyon phaeoclathratiforme (strain DSM 5477 / BU-1).